A 189-amino-acid chain; its full sequence is Group XIIA secretory phospholipase A2 (189 aa).

Positions M1 to C22 are cleaved as a signal peptide. Residues G88, P90, and F92 each coordinate Ca(2+). Residue H110 is part of the active site. D111 contributes to the Ca(2+) binding site. D125 is a catalytic residue.

Ca(2+) serves as cofactor. As to expression, abundantly expressed in heart, skeletal muscle, kidney, liver and pancreas.

It is found in the secreted. The protein localises to the cytoplasm. The catalysed reaction is a 1,2-diacyl-sn-glycero-3-phosphocholine + H2O = a 1-acyl-sn-glycero-3-phosphocholine + a fatty acid + H(+). In terms of biological role, PA2 catalyzes the calcium-dependent hydrolysis of the 2-acyl groups in 3-sn-phosphoglycerides. Does not exhibit detectable activity toward sn-2-arachidonoyl- or linoleoyl-phosphatidylcholine or -phosphatidylethanolamine. The sequence is that of Group XIIA secretory phospholipase A2 (PLA2G12A) from Homo sapiens (Human).